A 187-amino-acid polypeptide reads, in one-letter code: ATP-dependent protease subunit HslV (187 aa).

Thr13 is a catalytic residue. Na(+)-binding residues include Ala172, Cys175, and Thr178.

The protein belongs to the peptidase T1B family. HslV subfamily. As to quaternary structure, a double ring-shaped homohexamer of HslV is capped on each side by a ring-shaped HslU homohexamer. The assembly of the HslU/HslV complex is dependent on binding of ATP.

Its subcellular location is the cytoplasm. The enzyme catalyses ATP-dependent cleavage of peptide bonds with broad specificity.. Allosterically activated by HslU binding. Functionally, protease subunit of a proteasome-like degradation complex believed to be a general protein degrading machinery. The chain is ATP-dependent protease subunit HslV from Caulobacter sp. (strain K31).